A 227-amino-acid polypeptide reads, in one-letter code: MTSIDFPLLNRRTQNSVISTTPNELSNWSRLSSLWPLLYGTSCCFIEFASLIGSRFDFDRYGLVPRSSPRQADLILTAGTVTMKMAPSLVRLYEQMPEPKYVIAMGACTITGGMFSTDSYSTVRGVDKLLPVDVYLPGCPPKPEAVIDAITKLRKKISREIYADRIRSHRTNRSFTTNHKFQVGRSSHTGNYDQGFLSKPPSISEIPPETFFKYKSQSSVSSHALVN.

The [4Fe-4S] cluster site is built by cysteine 43, cysteine 44, cysteine 108, and cysteine 139. Polar residues predominate over residues 173 to 192 (RSFTTNHKFQVGRSSHTGNY). The tract at residues 173–201 (RSFTTNHKFQVGRSSHTGNYDQGFLSKPP) is disordered.

It belongs to the complex I 20 kDa subunit family. In terms of assembly, NDH is composed of at least 16 different subunits, 5 of which are encoded in the nucleus. It depends on [4Fe-4S] cluster as a cofactor.

The protein localises to the plastid. It localises to the chloroplast thylakoid membrane. It catalyses the reaction a plastoquinone + NADH + (n+1) H(+)(in) = a plastoquinol + NAD(+) + n H(+)(out). The catalysed reaction is a plastoquinone + NADPH + (n+1) H(+)(in) = a plastoquinol + NADP(+) + n H(+)(out). Its function is as follows. NDH shuttles electrons from NAD(P)H:plastoquinone, via FMN and iron-sulfur (Fe-S) centers, to quinones in the photosynthetic chain and possibly in a chloroplast respiratory chain. The immediate electron acceptor for the enzyme in this species is believed to be plastoquinone. Couples the redox reaction to proton translocation, and thus conserves the redox energy in a proton gradient. The polypeptide is NAD(P)H-quinone oxidoreductase subunit K, chloroplastic (Trachelium caeruleum (Blue throatwort)).